A 417-amino-acid polypeptide reads, in one-letter code: D-amino acid dehydrogenase (417 aa).

3–17 is a binding site for FAD; that stretch reads VVILGSGVIGVTSAW.

Belongs to the DadA oxidoreductase family. It depends on FAD as a cofactor.

It catalyses the reaction a D-alpha-amino acid + A + H2O = a 2-oxocarboxylate + AH2 + NH4(+). It functions in the pathway amino-acid degradation; D-alanine degradation; NH(3) and pyruvate from D-alanine: step 1/1. Its function is as follows. Oxidative deamination of D-amino acids. This Edwardsiella ictaluri (strain 93-146) protein is D-amino acid dehydrogenase.